The chain runs to 267 residues: MVETRLGWEAGGGLGAPGGPGGKLGGLGLAVGGTHSWSGLLKRVDRREARAQPRLLVLGCLLCQGISCPSCGPDMFVSLQKSLIDVFINAASLSHDFHNLSTIMFNEFDEKYAQGKLYYINATKSCHTNSFHTPEERDKAQQMNNEDLSKWTLVLLYSWNNPLYYLLLELRNMKNLSEAVISSAMEIENMSEKLQAFIESQFRKIIVPVLKMIHEVSNTWSRFSSMTFSDEDRSISEYYNLFYCLRRDSRKVDMYIKILTCRTRKTC.

N-linked (GlcNAc...) asparagine glycans are attached at residues Asn99 and Asn121. 2 disulfides stabilise this stretch: Cys126-Cys244 and Cys261-Cys267.

It belongs to the somatotropin/prolactin family.

The protein localises to the secreted. Functionally, placental prolactin-related proteins may play a specific role during gestation. The protein is Placental prolactin-related protein 2 (PRP2) of Bos taurus (Bovine).